The primary structure comprises 407 residues: ATP-citrate synthase subunit alpha chain protein 1 (407 aa).

The citrate site is built by Asn327, Thr329, and Arg360.

Belongs to the succinate/malate CoA ligase beta subunit family. Heterooctamer of 4 alpha and 4 beta chains.

It localises to the cytoplasm. The protein resides in the cytosol. It catalyses the reaction oxaloacetate + acetyl-CoA + ADP + phosphate = citrate + ATP + CoA. ATP citrate-lyase is the primary enzyme responsible for the synthesis of cytosolic acetyl-CoA, used for the elongation of fatty acids and biosynthesis of isoprenoids, flavonoids and malonated derivatives. May supply substrate to the cytosolic acetyl-CoA carboxylase, which generates the malonyl-CoA used for the synthesis of a multitude of compounds, including very long chain fatty acids and flavonoids. In contrast to all known animal ACL enzymes having a homomeric structure, plant ACLs are composed of alpha and beta chains. In Oryza sativa subsp. japonica (Rice), this protein is ATP-citrate synthase subunit alpha chain protein 1 (ACLA-1).